Here is a 136-residue protein sequence, read N- to C-terminus: Probable disulfide formation protein (136 aa).

A helical membrane pass occupies residues 7–26 (NNALYFAWLICSTGTVMSIY). A disulfide bridge connects residues cysteine 36 and cysteine 39. The next 2 helical transmembrane spans lie at 41 to 60 (YQRICLFPLSIILGIATYRE) and 67 to 84 (YALPLSITGMVIAVYQIC). Cysteines 96 and 101 form a disulfide. A helical transmembrane segment spans residues 109-133 (GFITVPMASALAFCAISCLLILSGS).

This sequence belongs to the DsbB family. BdbC subfamily.

The protein resides in the cell inner membrane. Its function is as follows. Required for disulfide bond formation in some proteins. This Chlamydia caviae (strain ATCC VR-813 / DSM 19441 / 03DC25 / GPIC) (Chlamydophila caviae) protein is Probable disulfide formation protein.